A 261-amino-acid polypeptide reads, in one-letter code: 3-methyl-2-oxobutanoate hydroxymethyltransferase (261 aa).

Asp-42 and Asp-81 together coordinate Mg(2+). Residues 42–43 (DS), Asp-81, and Lys-110 contribute to the 3-methyl-2-oxobutanoate site. Glu-112 contacts Mg(2+). Catalysis depends on Glu-179, which acts as the Proton acceptor.

The protein belongs to the PanB family. In terms of assembly, homodecamer; pentamer of dimers. It depends on Mg(2+) as a cofactor.

Its subcellular location is the cytoplasm. It carries out the reaction 3-methyl-2-oxobutanoate + (6R)-5,10-methylene-5,6,7,8-tetrahydrofolate + H2O = 2-dehydropantoate + (6S)-5,6,7,8-tetrahydrofolate. It functions in the pathway cofactor biosynthesis; (R)-pantothenate biosynthesis; (R)-pantoate from 3-methyl-2-oxobutanoate: step 1/2. Catalyzes the reversible reaction in which hydroxymethyl group from 5,10-methylenetetrahydrofolate is transferred onto alpha-ketoisovalerate to form ketopantoate. The protein is 3-methyl-2-oxobutanoate hydroxymethyltransferase of Thermus thermophilus (strain ATCC BAA-163 / DSM 7039 / HB27).